The primary structure comprises 63 residues: Hyphancin-3G (63 aa).

The signal sequence occupies residues 1 to 22 (MNFSRILFFMFACFVALASVSA). Positions 23–26 (VPEP) are cleaved as a propeptide — removed by a dipeptidylpeptidase. A Leucine amide modification is found at Leu61.

It belongs to the cecropin family.

It localises to the secreted. Has antibacterial activity. The protein is Hyphancin-3G of Hyphantria cunea (Fall webworm moth).